The sequence spans 429 residues: Ribosomal RNA small subunit methyltransferase B (429 aa).

S-adenosyl-L-methionine contacts are provided by residues 254 to 260 (CAAPGGK), D277, D303, and D322. Catalysis depends on C375, which acts as the Nucleophile.

This sequence belongs to the class I-like SAM-binding methyltransferase superfamily. RsmB/NOP family.

Its subcellular location is the cytoplasm. It catalyses the reaction cytidine(967) in 16S rRNA + S-adenosyl-L-methionine = 5-methylcytidine(967) in 16S rRNA + S-adenosyl-L-homocysteine + H(+). Specifically methylates the cytosine at position 967 (m5C967) of 16S rRNA. The chain is Ribosomal RNA small subunit methyltransferase B from Escherichia coli O127:H6 (strain E2348/69 / EPEC).